Here is a 293-residue protein sequence, read N- to C-terminus: AKT-interacting protein homolog A (293 aa).

A compositionally biased stretch (polar residues) spans 1-11; the sequence is MNPFWNMSSAS. The segment at 1 to 45 is disordered; it reads MNPFWNMSSASVRKRSENDEKISTGDQKISPPRSSSAKKQLPPIP. Residues 14–23 are compositionally biased toward basic and acidic residues; sequence KRSENDEKIS. Positions 24–38 are enriched in polar residues; that stretch reads TGDQKISPPRSSSAK. Residues 75–223 form the UBC core domain; that stretch reads YLEYSLLAEF…VVDSVKLCNS (149 aa). The segment covering 256 to 266 has biased composition (basic and acidic residues); sequence AQKKKSEEQSK. Residues 256–293 are disordered; it reads AQKKKSEEQSKGLHVSGLSWVKPGSVLPFSKEENSLQT.

Belongs to the ubiquitin-conjugating enzyme family. FTS subfamily.

It is found in the cytoplasm. The protein localises to the cell membrane. May function to promote vesicle trafficking and/or fusion. May also regulate apoptosis. The chain is AKT-interacting protein homolog A (aktip-a) from Xenopus laevis (African clawed frog).